Consider the following 100-residue polypeptide: Large ribosomal subunit protein uL23 (100 aa).

The protein belongs to the universal ribosomal protein uL23 family. In terms of assembly, part of the 50S ribosomal subunit. Contacts protein L29, and trigger factor when it is bound to the ribosome.

One of the early assembly proteins it binds 23S rRNA. One of the proteins that surrounds the polypeptide exit tunnel on the outside of the ribosome. Forms the main docking site for trigger factor binding to the ribosome. The chain is Large ribosomal subunit protein uL23 from Shewanella denitrificans (strain OS217 / ATCC BAA-1090 / DSM 15013).